We begin with the raw amino-acid sequence, 301 residues long: Probable alpha-L-glutamate ligase (301 aa).

The region spanning T104–E287 is the ATP-grasp domain. ATP contacts are provided by residues K141, E178–Y179, D187, and R211–N213. Residues D248, E260, and N262 each coordinate Mg(2+). Mn(2+)-binding residues include D248, E260, and N262.

The protein belongs to the RimK family. Mg(2+) serves as cofactor. Requires Mn(2+) as cofactor.

In Alkalilimnicola ehrlichii (strain ATCC BAA-1101 / DSM 17681 / MLHE-1), this protein is Probable alpha-L-glutamate ligase.